The chain runs to 922 residues: ATP-dependent helicase fft3 (922 aa).

Disordered regions lie at residues 139–177 (EPKMPSYMDDEEASDSLPLSLSSQSLSSQVTNQKPAPHR) and 198–224 (PLSSRKTYEPEADDDSNDDMYSDDDSN). A compositionally biased stretch (low complexity) spans 153-166 (DSLPLSLSSQSLSS). Acidic residues predominate over residues 207-223 (PEADDDSNDDMYSDDDS). Phosphoserine occurs at positions 213 and 219. In terms of domain architecture, Helicase ATP-binding spans 399–567 (YLLYELKLAG…ISLLAFILPH (169 aa)). ATP is bound at residue 412 to 419 (DEMGLGKT). Positions 518–521 (DEGH) match the DEGH box motif. The residue at position 617 (serine 617) is a Phosphoserine. The region spanning 765 to 922 (KLKKLLTNAV…ETVEAEDDDD (158 aa)) is the Helicase C-terminal domain.

It belongs to the SNF2/RAD54 helicase family. In terms of assembly, interacts with the GDP-bound form of spi1.

It is found in the nucleus. The protein localises to the chromosome. It catalyses the reaction ATP + H2O = ADP + phosphate + H(+). In terms of biological role, DNA helicase that possesses intrinsic ATP-dependent nucleosome-remodeling activity and is required for heterochromatin organization. Required for maintaining a heterochromatin chromatin structure at centromeres and subtelomeres by protecting these regions from euchromatin assembly. Enhances the nucleotide exchange activity of the pim1 guanine nucleotide exchange factor and abolishes histone-H3-mediated RanGAP inhibition. Involved in the construction of the centromeres. The sequence is that of ATP-dependent helicase fft3 (fft3) from Schizosaccharomyces pombe (strain 972 / ATCC 24843) (Fission yeast).